The sequence spans 82 residues: ATP synthase subunit c (82 aa).

A run of 2 helical transmembrane segments spans residues 5–25 (MSLV…FGAI) and 55–75 (FLII…VIAF).

The protein belongs to the ATPase C chain family. As to quaternary structure, F-type ATPases have 2 components, F(1) - the catalytic core - and F(0) - the membrane proton channel. F(1) has five subunits: alpha(3), beta(3), gamma(1), delta(1), epsilon(1). F(0) has three main subunits: a(1), b(2) and c(10-14). The alpha and beta chains form an alternating ring which encloses part of the gamma chain. F(1) is attached to F(0) by a central stalk formed by the gamma and epsilon chains, while a peripheral stalk is formed by the delta and b chains.

The protein localises to the cell membrane. Functionally, f(1)F(0) ATP synthase produces ATP from ADP in the presence of a proton or sodium gradient. F-type ATPases consist of two structural domains, F(1) containing the extramembraneous catalytic core and F(0) containing the membrane proton channel, linked together by a central stalk and a peripheral stalk. During catalysis, ATP synthesis in the catalytic domain of F(1) is coupled via a rotary mechanism of the central stalk subunits to proton translocation. Its function is as follows. Key component of the F(0) channel; it plays a direct role in translocation across the membrane. A homomeric c-ring of between 10-14 subunits forms the central stalk rotor element with the F(1) delta and epsilon subunits. The polypeptide is ATP synthase subunit c (Carboxydothermus hydrogenoformans (strain ATCC BAA-161 / DSM 6008 / Z-2901)).